The sequence spans 24 residues: Glutamate dehydrogenase (24 aa).

Belongs to the Glu/Leu/Phe/Val dehydrogenases family. As to quaternary structure, homohexamer.

It localises to the cytoplasm. The catalysed reaction is L-glutamate + NAD(+) + H2O = 2-oxoglutarate + NH4(+) + NADH + H(+). It carries out the reaction L-glutamate + NADP(+) + H2O = 2-oxoglutarate + NH4(+) + NADPH + H(+). The chain is Glutamate dehydrogenase (gdhA) from Pyrococcus woesei.